Consider the following 367-residue polypeptide: MYVFKALAGIVLALVATLAHAERIRDLTSVQGVRENSLIGYGLVVGLDGTGDQTTQTPFTTQTLNNMLSQLGITVPTGTNMQLKNVAAVMVTASYPPFARQGQTIDVVVSSMGNAKSLRGGTLLMTPLKGVDSQVYALAQGNILVGGVGASAGGSSVQVNQLNGGRITNGAIIERELPTQFGAGNTINLQLNDEDFTMAQQITDAINRARGYGSATALDARTVQVRVPSGNSSQVRFLADIQNMEVNVTPQDAKVVINSRTGSVVMNREVTLDSCAVAQGNLSVTVNRQLNVNQPNTPFGGGQTVVTPQTQIDLRQSGGSLQSVRSSANLNSVVRALNALGATPMDLMSILQSMQSAGCLRAKLEII.

Residues 1-21 (MYVFKALAGIVLALVATLAHA) form the signal peptide.

It belongs to the FlgI family. In terms of assembly, the basal body constitutes a major portion of the flagellar organelle and consists of four rings (L,P,S, and M) mounted on a central rod.

Its subcellular location is the periplasm. The protein localises to the bacterial flagellum basal body. In terms of biological role, assembles around the rod to form the L-ring and probably protects the motor/basal body from shearing forces during rotation. In Salmonella choleraesuis (strain SC-B67), this protein is Flagellar P-ring protein.